A 955-amino-acid polypeptide reads, in one-letter code: MSQNTPSLRELEHHNAFVERHIGPNDAEIAQMLDVVGHASLDAMTDAIVPAKIKSPAPLALPESMTEVQALAKIRAIADKNTVLRSFIGQGYYGTHTPNVILRNILENPAWYTAYTPYQAEISQGRMEALINFQTLCADLTGMEIANASLLDEATAAAEAMTLAKRSAKSKSDTFFVHDAVHPQTLELLRTRAEPMGIVLRVGTPAEALEAEAFGLLLQYPDTFGQVGDYKALVDAVHARGGLVAVATDLLALTLLAAPGEWGADIVVGNSQRFGVPFGFGGPHAAFMACRDAYKRSMPGRLIGVSIDAQGNPAYRLTLQTREQHIRREKATSNICTAQVLLAVMASMYAVYHGPEGLTRIARRTHRLASILAAALRNAGVQVGGDFFDTLHVTGVHADEIHAKARAAGYNLRAIDSDSVGISLDETTTRADIVAVAAVFGASLDVDALDASTADALPAGLLRQSAFLTHPVFNTHHSEHELLRYLRSLADKDLAMDRTMIPLGSCTMKLNATAEMIPVTWPEFSQIHPLVPADQALGYKELIDTLEAMLVECTGYDAVSLQPNSGAQGEYAGLLAIRAYHRSRGEGHRDICLIPDSAHGTNPASAQMCGMKVVVTKTDANGNVDVEDIRLNAEKYSDRLAAIMMTYPSTHGVFEEEVVEICEIIHKHGGQVYTDGANMNALVGVAKPGKWGSDVSHLNLHKTFCIPHGGGGPGVGPCAVKEHLAPFLPGKLGDNGPVGMVSAASFGSASILPISWMYIAMMGREGLRKATQVAQLNANYIAKRLAPHFKTLYTGRNGLVAHECILDVRPLEKTSGIGAEDVAKRLIDFGFHAPTLSFPVAGTLMVEPTESESLHELDRFIDAMIQIREEITAIEDGRLDREDNPLKNAPHTATAVTASEWTHAYPRELAAFPLASLKQSKYWPPVARVDNVYGDKNVMCACIPVDAYKDDEVEA.

Position 702 is an N6-(pyridoxal phosphate)lysine (K702).

The protein belongs to the GcvP family. In terms of assembly, the glycine cleavage system is composed of four proteins: P, T, L and H. Pyridoxal 5'-phosphate serves as cofactor.

The enzyme catalyses N(6)-[(R)-lipoyl]-L-lysyl-[glycine-cleavage complex H protein] + glycine + H(+) = N(6)-[(R)-S(8)-aminomethyldihydrolipoyl]-L-lysyl-[glycine-cleavage complex H protein] + CO2. Its function is as follows. The glycine cleavage system catalyzes the degradation of glycine. The P protein binds the alpha-amino group of glycine through its pyridoxal phosphate cofactor; CO(2) is released and the remaining methylamine moiety is then transferred to the lipoamide cofactor of the H protein. In Stenotrophomonas maltophilia (strain K279a), this protein is Glycine dehydrogenase (decarboxylating).